Reading from the N-terminus, the 729-residue chain is Neurochondrin (729 aa).

Serine 2 carries the N-acetylserine modification. Serine 2 bears the Phosphoserine mark. 2 S-palmitoyl cysteine lipidation sites follow: cysteine 3 and cysteine 4. Arginine 75 is modified (asymmetric dimethylarginine). Serine 448 carries the phosphoserine modification.

This sequence belongs to the neurochondrin family. In terms of assembly, interacts with MCHR1. Interacts with SEMA4C. Interacts with DIAPH1 (via FH3 domain). Interacts with GRM5. Palmitoylated. Palmitoylation by ZDHHC1, ZDHHC3 and ZDHHC11 regulates the association of NCDN with endosome membranes. May also be palmitoylated by ZDHHC7. As to expression, expressed in brain and in peripheral nervous system (at protein level). Weakly expressed in neurites.

It is found in the cytoplasm. It localises to the cytosol. Its subcellular location is the endosome membrane. The protein resides in the cell projection. The protein localises to the dendrite. It is found in the postsynapse. Probably involved in signal transduction, in the nervous system, via increasing cell surface localization of GRM5 and positively regulating its signaling. Required for the spatial learning process. Acts as a negative regulator of Ca(2+)-calmodulin-dependent protein kinase 2 (CaMK2) phosphorylation. May play a role in modulating melanin-concentrating hormone-mediated functions via its interaction with MCHR1 that interferes with G protein-coupled signal transduction. May be involved in bone metabolism. May also be involved in neurite outgrowth. The protein is Neurochondrin (Ncdn) of Rattus norvegicus (Rat).